The primary structure comprises 178 residues: Fatty-acid and retinol-binding protein 1 (178 aa).

Residues 1–16 form the signal peptide; sequence MYHRLILLALVGTTMA. Coiled coils occupy residues 67–89 and 130–153; these read DAAL…ELRN and KQAA…ELKV.

It belongs to the fatty-acid and retinol-binding protein (FARBP) family. Post-translationally, not glycosylated.

The protein resides in the secreted. In terms of biological role, binds retinol. Also binds the fluorescent fatty acid 11-((5-dimethylaminonaphthalene-1-sulfonyl)amino)undecanoic acid (DAUDA). The long chain fatty acid oleic acid can act competitively to displace bound DAUDA and retinol. The sequence is that of Fatty-acid and retinol-binding protein 1 from Brugia malayi (Filarial nematode worm).